Here is a 257-residue protein sequence, read N- to C-terminus: NAD-capped RNA hydrolase NudC (257 aa).

Residues K25 and R69 each coordinate substrate. Zn(2+) contacts are provided by C98 and C101. E111 provides a ligand contact to substrate. Residues C116 and C119 each contribute to the Zn(2+) site. Y124 serves as a coordination point for substrate. The 124-residue stretch at 125–248 folds into the Nudix hydrolase domain; the sequence is PQIAPCIIVA…TVARRLIEDT (124 aa). A divalent metal cation-binding residues include A158, E174, and E178. The Nudix box signature appears at 159 to 180; it reads GFVEVGETLEQAVAREVMEESG. 192-199 serves as a coordination point for substrate; that stretch reads QPWPFPQS. E219 contributes to the a divalent metal cation binding site. Substrate is bound at residue A241.

This sequence belongs to the Nudix hydrolase family. NudC subfamily. In terms of assembly, homodimer. Requires Mg(2+) as cofactor. The cofactor is Mn(2+). Zn(2+) serves as cofactor.

It carries out the reaction a 5'-end NAD(+)-phospho-ribonucleoside in mRNA + H2O = a 5'-end phospho-adenosine-phospho-ribonucleoside in mRNA + beta-nicotinamide D-ribonucleotide + 2 H(+). The catalysed reaction is NAD(+) + H2O = beta-nicotinamide D-ribonucleotide + AMP + 2 H(+). It catalyses the reaction NADH + H2O = reduced beta-nicotinamide D-ribonucleotide + AMP + 2 H(+). Functionally, mRNA decapping enzyme that specifically removes the nicotinamide adenine dinucleotide (NAD) cap from a subset of mRNAs by hydrolyzing the diphosphate linkage to produce nicotinamide mononucleotide (NMN) and 5' monophosphate mRNA. The NAD-cap is present at the 5'-end of some mRNAs and stabilizes RNA against 5'-processing. Has preference for mRNAs with a 5'-end purine. Catalyzes the hydrolysis of a broad range of dinucleotide pyrophosphates. In Escherichia coli (strain 55989 / EAEC), this protein is NAD-capped RNA hydrolase NudC.